A 367-amino-acid polypeptide reads, in one-letter code: 3-dehydroquinate synthase (367 aa).

NAD(+) is bound by residues 69 to 74, 103 to 107, 127 to 128, Lys140, Lys149, and 167 to 170; these read DGESHK, GVIGD, TT, and TLAT. Positions 182, 245, and 262 each coordinate Zn(2+).

Belongs to the sugar phosphate cyclases superfamily. Dehydroquinate synthase family. Requires Co(2+) as cofactor. Zn(2+) serves as cofactor. The cofactor is NAD(+).

It is found in the cytoplasm. The catalysed reaction is 7-phospho-2-dehydro-3-deoxy-D-arabino-heptonate = 3-dehydroquinate + phosphate. The protein operates within metabolic intermediate biosynthesis; chorismate biosynthesis; chorismate from D-erythrose 4-phosphate and phosphoenolpyruvate: step 2/7. Catalyzes the conversion of 3-deoxy-D-arabino-heptulosonate 7-phosphate (DAHP) to dehydroquinate (DHQ). The polypeptide is 3-dehydroquinate synthase (Stutzerimonas stutzeri (strain A1501) (Pseudomonas stutzeri)).